The following is a 435-amino-acid chain: Serine hydroxymethyltransferase (435 aa).

(6S)-5,6,7,8-tetrahydrofolate is bound by residues Leu131 and Gly135–Leu137. Position 240 is an N6-(pyridoxal phosphate)lysine (Lys240).

It belongs to the SHMT family. Homodimer. It depends on pyridoxal 5'-phosphate as a cofactor.

The protein resides in the cytoplasm. The catalysed reaction is (6R)-5,10-methylene-5,6,7,8-tetrahydrofolate + glycine + H2O = (6S)-5,6,7,8-tetrahydrofolate + L-serine. It functions in the pathway one-carbon metabolism; tetrahydrofolate interconversion. The protein operates within amino-acid biosynthesis; glycine biosynthesis; glycine from L-serine: step 1/1. Its function is as follows. Catalyzes the reversible interconversion of serine and glycine with tetrahydrofolate (THF) serving as the one-carbon carrier. This reaction serves as the major source of one-carbon groups required for the biosynthesis of purines, thymidylate, methionine, and other important biomolecules. Also exhibits THF-independent aldolase activity toward beta-hydroxyamino acids, producing glycine and aldehydes, via a retro-aldol mechanism. In Bifidobacterium longum subsp. infantis (strain ATCC 15697 / DSM 20088 / JCM 1222 / NCTC 11817 / S12), this protein is Serine hydroxymethyltransferase.